Here is a 433-residue protein sequence, read N- to C-terminus: MKNIMQSIFLLSLGCSKNTVDSERLIRQAELNGLHFTDQADDADIIIINTCGFIADAKEESINEILAATEKRHNGEIKALFVMGCLSALYSRELRAELPEVDHFFGTSDLEEIISVLGGSYRPSNIHERTLLTPPHYAWLKIAEGCSRTCSFCAIPKMRGRYRSEPIERLEKEASLLLKNGVRELNIISQDITQYGWDFDERSHLNDLLKKLAAQEFSWIRLLYAYPLHFPLDVIDTMREHANICNYLDMPVQHISDRILKSMQRGIDKKGTIGLLESIRKKNPDIRLRTTMIVGYPGETDREFDELLEFVAQLRFDRLGCFPYSHEEHTSAFKHLEDDIPEKIKKERVEALMELQESIAAERNRELEGRVMKVLVDEVEGSIAYARTEYDAPEVDNDVLVDIGDNPVQPGDFCTVTIEESSAYELHGRVNDC.

One can recognise an MTTase N-terminal domain in the interval 6–122; that stretch reads QSIFLLSLGC…IISVLGGSYR (117 aa). Cysteine 15, cysteine 51, cysteine 85, cysteine 146, cysteine 150, and cysteine 153 together coordinate [4Fe-4S] cluster. The region spanning 132 to 362 is the Radical SAM core domain; it reads LTPPHYAWLK…MELQESIAAE (231 aa). Residues 365–432 form the TRAM domain; sequence RELEGRVMKV…AYELHGRVND (68 aa).

Belongs to the methylthiotransferase family. RimO subfamily. [4Fe-4S] cluster serves as cofactor.

The protein resides in the cytoplasm. It catalyses the reaction L-aspartate(89)-[ribosomal protein uS12]-hydrogen + (sulfur carrier)-SH + AH2 + 2 S-adenosyl-L-methionine = 3-methylsulfanyl-L-aspartate(89)-[ribosomal protein uS12]-hydrogen + (sulfur carrier)-H + 5'-deoxyadenosine + L-methionine + A + S-adenosyl-L-homocysteine + 2 H(+). Catalyzes the methylthiolation of an aspartic acid residue of ribosomal protein uS12. In Prosthecochloris aestuarii (strain DSM 271 / SK 413), this protein is Ribosomal protein uS12 methylthiotransferase RimO.